We begin with the raw amino-acid sequence, 338 residues long: Citramalyl-CoA lyase, mitochondrial (338 aa).

The N-terminal 20 residues, 1-20, are a transit peptide targeting the mitochondrion; that stretch reads MALCVLRNTVRGAAALPRLK. Substrate is bound by residues Tyr-48, Lys-55, and Lys-59. 3 positions are modified to N6-acetyllysine: Lys-55, Lys-59, and Lys-64. Lys-80 and Lys-90 each carry N6-acetyllysine; alternate. 2 positions are modified to N6-succinyllysine; alternate: Lys-80 and Lys-90. Residue Arg-105 coordinates substrate. Mg(2+) is bound by residues Glu-169 and Asp-204. A substrate-binding site is contributed by 270–271; the sequence is IH. Residue Lys-307 is modified to N6-succinyllysine. Residue Asp-318 is part of the active site.

It belongs to the HpcH/HpaI aldolase family. Citrate lyase beta subunit-like subfamily. In terms of assembly, homotrimer. Mg(2+) is required as a cofactor. Detected in brown fat, brain, liver, kidney, heart, skeletal muscle and ovary (at protein level).

The protein localises to the mitochondrion. The enzyme catalyses glyoxylate + acetyl-CoA + H2O = (S)-malate + CoA + H(+). It catalyses the reaction propanoyl-CoA + glyoxylate + H2O = 3-methylmalate + CoA + H(+). It carries out the reaction (3S)-citramalyl-CoA = pyruvate + acetyl-CoA. The catalysed reaction is (S)-malyl-CoA + H2O = (S)-malate + CoA + H(+). Mitochondrial citramalyl-CoA lyase indirectly involved in the vitamin B12 metabolism. Converts citramalyl-CoA into acetyl-CoA and pyruvate in the C5-dicarboxylate catabolism pathway. The C5-dicarboxylate catabolism pathway is required to detoxify itaconate, a vitamin B12-poisoning metabolite. Also acts as a malate synthase in vitro, converting glyoxylate and acetyl-CoA to malate. Also displays malyl-CoA thioesterase activity. Also acts as a beta-methylmalate synthase in vitro, by mediating conversion of glyoxylate and propionyl-CoA to beta-methylmalate. Also has very weak citramalate synthase activity in vitro. The protein is Citramalyl-CoA lyase, mitochondrial of Mus musculus (Mouse).